The primary structure comprises 226 residues: Urease accessory protein UreF (226 aa).

It belongs to the UreF family. In terms of assembly, ureD, UreF and UreG form a complex that acts as a GTP-hydrolysis-dependent molecular chaperone, activating the urease apoprotein by helping to assemble the nickel containing metallocenter of UreC. The UreE protein probably delivers the nickel.

The protein resides in the cytoplasm. Functionally, required for maturation of urease via the functional incorporation of the urease nickel metallocenter. This chain is Urease accessory protein UreF, found in Burkholderia multivorans (strain ATCC 17616 / 249).